Here is an 81-residue protein sequence, read N- to C-terminus: Small ribosomal subunit protein bS18A (81 aa).

Belongs to the bacterial ribosomal protein bS18 family. As to quaternary structure, part of the 30S ribosomal subunit. Forms a tight heterodimer with protein bS6.

In terms of biological role, binds as a heterodimer with protein bS6 to the central domain of the 16S rRNA, where it helps stabilize the platform of the 30S subunit. The sequence is that of Small ribosomal subunit protein bS18A from Saccharopolyspora erythraea (strain ATCC 11635 / DSM 40517 / JCM 4748 / NBRC 13426 / NCIMB 8594 / NRRL 2338).